Here is a 164-residue protein sequence, read N- to C-terminus: Phosphohistidine phosphatase SixA homolog (164 aa).

It belongs to the SixA phosphatase family.

The polypeptide is Phosphohistidine phosphatase SixA homolog (sixA-A) (Haemophilus influenzae (strain ATCC 51907 / DSM 11121 / KW20 / Rd)).